The chain runs to 245 residues: MIIVSGQLLRPQDIENWQIDQDLNPLLKEMIETPVQFDYHSIAELMFELKLRMNIVAAAKTLHKSGAKFATFLKTYGNTTYWRVSPEGALELKYRMPPSKAIRDIAENGPFYAFECATAIVIIYYLALIDTIGEDKFNASFDRIILYDWHYEKLPIYTETGHHFFLGDCLYFKNPEFDPQKAQWRGENVILLGEDKYFAHGLGILNGKQIIDKLNSFRKKGALQSAYLLSQATRLDVPSLFRIVR.

It belongs to the bacillus TGase family.

The enzyme catalyses L-glutaminyl-[protein] + L-lysyl-[protein] = [protein]-L-lysyl-N(6)-5-L-glutamyl-[protein] + NH4(+). In terms of biological role, probably plays a role in the assembly of the spore coat proteins by catalyzing epsilon-(gamma-glutamyl)lysine cross-links. In wild-type spores at 37 degrees Celsius, tgl mediates the cross-linking of GerQ in higher molecular mass forms, probably in cooperation with YabG. The polypeptide is Protein-glutamine gamma-glutamyltransferase (tgl) (Bacillus subtilis (strain 168)).